A 489-amino-acid polypeptide reads, in one-letter code: Cytochrome P450 monooxygenase tazI (489 aa).

Residue C433 coordinates heme.

Belongs to the cytochrome P450 family. Requires heme as cofactor.

It participates in secondary metabolite biosynthesis. Cytochrome P450 monooxygenase; part of the gene cluster that mediates the biosynthesis of azaterrilone A and other azaphilones, a class of fungal metabolites characterized by a highly oxygenated pyrano-quinone bicyclic core and exhibiting a broad range of bioactivities. The first step of the pathway begins with the non-reducing polyketide synthase tazA that assembles one acetyl-CoA starter unit, five malonyl-CoA units, and catalyzes a series of Claisen condensations, methylation, PT-mediated cyclization, and finally releases the first hexaketide precursor through the R-domain. The tazA product then undergoes reduction on its terminal ketone and the following pyran-ring formation by yet undetermined enzyme(s). Dehydration and enoyl reduction, possibly involving the trans-enoyl reductase tazE leads to the next intermediate. TazD is predicted as an acetyltransferase and might catalyze the acetylation steps leading to the synthesis of azaterrilone A. Azaterrilone A is not the final product of the taz pathway and both the highly reducing polyketide synthase tazB and the dual enzyme tazHJ catalyze late steps of the pathway, leading to the production of the 2 final stereoisomers that contain additional polyketide modification whose structures have still to be determined. This is Cytochrome P450 monooxygenase tazI from Aspergillus terreus (strain NIH 2624 / FGSC A1156).